Reading from the N-terminus, the 124-residue chain is Alkaline proteinase inhibitor (124 aa).

An N-terminal signal peptide occupies residues M1–G24. C47 and C70 are joined by a disulfide.

The protein belongs to the protease inhibitor I38 family. As to quaternary structure, monomer.

Its subcellular location is the periplasm. Its function is as follows. Inhibitor of the alkaline protease. Inhibits SMP by formation of a non-covalent complex with a molar ratio of 1:1 and shows a high specificity. The chain is Alkaline proteinase inhibitor (inh) from Serratia marcescens.